A 246-amino-acid polypeptide reads, in one-letter code: Glandular kallikrein (246 aa).

Residues 1–7 (APPIQSR) constitute a propeptide that is removed on maturation. A Peptidase S1 domain is found at 8-243 (IIGGRECEKN…YLDWINDTIT (236 aa)). Intrachain disulfides connect Cys-14–Cys-158, Cys-33–Cys-49, Cys-135–Cys-204, Cys-169–Cys-183, and Cys-194–Cys-219. The active-site Charge relay system is His-48. Residue Asn-85 is glycosylated (N-linked (GlcNAc...) asparagine). A kallikrein (autolysis) loop region spans residues 85–104 (NLSLLKXHTKADGKDYSHDL). Asp-103 serves as the catalytic Charge relay system. The active-site Charge relay system is Ser-198. Asn-239 carries N-linked (GlcNAc...) asparagine glycosylation.

It belongs to the peptidase S1 family. Kallikrein subfamily. As to quaternary structure, monomer.

It catalyses the reaction Preferential cleavage of Arg-|-Xaa bonds in small molecule substrates. Highly selective action to release kallidin (lysyl-bradykinin) from kininogen involves hydrolysis of Met-|-Xaa or Leu-|-Xaa.. Functionally, glandular kallikreins cleave Met-Lys and Arg-Ser bonds in kininogen to release Lys-bradykinin. The protein is Glandular kallikrein of Sus scrofa (Pig).